We begin with the raw amino-acid sequence, 184 residues long: Serine recombinase PinE (184 aa).

Residues 1 to 134 (MLIGYVRVST…AGLETARAQG (134 aa)) enclose the Resolvase/invertase-type recombinase catalytic domain. Ser-9 (O-(5'-phospho-DNA)-serine intermediate) is an active-site residue. The segment at residues 161 to 180 (RQKVAIIYDVGVSTLYKRFP) is a DNA-binding region (H-T-H motif).

This sequence belongs to the site-specific recombinase resolvase family.

Its function is as follows. This protein catalyzes the inversion of an 1800-bp E.coli DNA fragment, the P region, which can exist in either orientation. The function of the inversion is not yet clear. This is Serine recombinase PinE (pinE) from Escherichia coli (strain K12).